Consider the following 364-residue polypeptide: Aminomethyltransferase (364 aa).

This sequence belongs to the GcvT family. As to quaternary structure, the glycine cleavage system is composed of four proteins: P, T, L and H.

It carries out the reaction N(6)-[(R)-S(8)-aminomethyldihydrolipoyl]-L-lysyl-[protein] + (6S)-5,6,7,8-tetrahydrofolate = N(6)-[(R)-dihydrolipoyl]-L-lysyl-[protein] + (6R)-5,10-methylene-5,6,7,8-tetrahydrofolate + NH4(+). Its function is as follows. The glycine cleavage system catalyzes the degradation of glycine. This chain is Aminomethyltransferase, found in Shigella flexneri.